The primary structure comprises 675 residues: TOM1-like protein 9 (675 aa).

Positions 9 to 138 (ATSEMLIGPD…ELLRAGAVFP (130 aa)) constitute a VHS domain. Disordered stretches follow at residues 144–181 (SAPV…EPEF), 270–322 (LPGT…QLAL), 371–524 (FSDN…YAQM), 542–561 (QNGV…GYQP), and 622–675 (RDQT…AGTM). A GAT domain is found at 180 to 268 (EFPTLSLSEI…VLTNYEAIAS (89 aa)). 2 stretches are compositionally biased toward polar residues: residues 299 to 317 (GDSS…NGVL) and 372 to 435 (SDNT…GQGV). The segment covering 436–451 (SSPWSSQPAQQPVQPS) has biased composition (low complexity). Composition is skewed to polar residues over residues 470-481 (QDYSPSAESGSP) and 488-524 (PTQT…YAQM). A compositionally biased stretch (basic and acidic residues) spans 646-661 (NKPEDKLFGDLVDISK).

This sequence belongs to the TOM1 family. In terms of assembly, interacts with ELC/VPS23A and ELCL/VPS23B. As to expression, ubiquitously expressed.

The protein localises to the cytoplasm. It localises to the membrane. Its function is as follows. Might contribute to the loading of the ESCRT machinery. This chain is TOM1-like protein 9, found in Arabidopsis thaliana (Mouse-ear cress).